We begin with the raw amino-acid sequence, 113 residues long: Large ribosomal subunit protein bL17 (113 aa).

The protein belongs to the bacterial ribosomal protein bL17 family. In terms of assembly, part of the 50S ribosomal subunit. Contacts protein L32.

This Alkaliphilus metalliredigens (strain QYMF) protein is Large ribosomal subunit protein bL17.